Consider the following 262-residue polypeptide: Hydroxyethylthiazole kinase (262 aa).

Residue Met-39 participates in substrate binding. ATP-binding residues include Lys-115 and Thr-160. A substrate-binding site is contributed by Gly-187.

Belongs to the Thz kinase family. Requires Mg(2+) as cofactor.

It catalyses the reaction 5-(2-hydroxyethyl)-4-methylthiazole + ATP = 4-methyl-5-(2-phosphooxyethyl)-thiazole + ADP + H(+). It participates in cofactor biosynthesis; thiamine diphosphate biosynthesis; 4-methyl-5-(2-phosphoethyl)-thiazole from 5-(2-hydroxyethyl)-4-methylthiazole: step 1/1. Its function is as follows. Catalyzes the phosphorylation of the hydroxyl group of 4-methyl-5-beta-hydroxyethylthiazole (THZ). The sequence is that of Hydroxyethylthiazole kinase from Staphylococcus epidermidis (strain ATCC 12228 / FDA PCI 1200).